Reading from the N-terminus, the 429-residue chain is Glutamate-1-semialdehyde 2,1-aminomutase 2 (429 aa).

At Lys-268 the chain carries N6-(pyridoxal phosphate)lysine.

This sequence belongs to the class-III pyridoxal-phosphate-dependent aminotransferase family. HemL subfamily. Homodimer. The cofactor is pyridoxal 5'-phosphate.

The protein resides in the cytoplasm. The catalysed reaction is (S)-4-amino-5-oxopentanoate = 5-aminolevulinate. Its pathway is porphyrin-containing compound metabolism; protoporphyrin-IX biosynthesis; 5-aminolevulinate from L-glutamyl-tRNA(Glu): step 2/2. This chain is Glutamate-1-semialdehyde 2,1-aminomutase 2, found in Bacillus cereus (strain AH187).